A 246-amino-acid chain; its full sequence is DNA-directed RNA polymerase subunit alpha (246 aa).

It belongs to the RNA polymerase alpha chain family. As to quaternary structure, in plastids the minimal PEP RNA polymerase catalytic core is composed of four subunits: alpha, beta, beta', and beta''. When a (nuclear-encoded) sigma factor is associated with the core the holoenzyme is formed, which can initiate transcription (Potential).

The protein localises to the plastid. The enzyme catalyses RNA(n) + a ribonucleoside 5'-triphosphate = RNA(n+1) + diphosphate. DNA-dependent RNA polymerase catalyzes the transcription of DNA into RNA using the four ribonucleoside triphosphates as substrates. In Helicosporidium sp. subsp. Simulium jonesii (Green alga), this protein is DNA-directed RNA polymerase subunit alpha (rpoA).